A 504-amino-acid polypeptide reads, in one-letter code: Taurochenodeoxycholic 6 alpha-hydroxylase (504 aa).

Transmembrane regions (helical) follow at residues 6–26 and 110–130; these read LASV…LLLL and APVL…LLNG. Heme is bound at residue cysteine 451.

The protein belongs to the cytochrome P450 family. It depends on heme as a cofactor. As to expression, primarily expressed in liver. Low expression in kidney.

The protein resides in the endoplasmic reticulum membrane. The enzyme catalyses taurochenodeoxycholate + reduced [NADPH--hemoprotein reductase] + O2 = taurohyocholate + oxidized [NADPH--hemoprotein reductase] + H2O + H(+). It catalyses the reaction lithocholate + reduced [NADPH--hemoprotein reductase] + O2 = hyodeoxycholate + oxidized [NADPH--hemoprotein reductase] + H2O + H(+). In terms of biological role, catalyzes the 6 alpha hydroxylation oxidation of taurodeoxycholate to produce the pig specific bile acid taurohyocholic acid. This Sus scrofa (Pig) protein is Taurochenodeoxycholic 6 alpha-hydroxylase (CYP4A21).